Reading from the N-terminus, the 113-residue chain is ATP-dependent Clp protease adapter protein ClpS (113 aa).

The segment at methionine 1 to threonine 24 is disordered.

This sequence belongs to the ClpS family. Binds to the N-terminal domain of the chaperone ClpA.

In terms of biological role, involved in the modulation of the specificity of the ClpAP-mediated ATP-dependent protein degradation. The sequence is that of ATP-dependent Clp protease adapter protein ClpS from Ruegeria pomeroyi (strain ATCC 700808 / DSM 15171 / DSS-3) (Silicibacter pomeroyi).